Consider the following 356-residue polypeptide: Alanine racemase (356 aa).

The Proton acceptor; specific for D-alanine role is filled by lysine 35. Lysine 35 is modified (N6-(pyridoxal phosphate)lysine). Position 130 (arginine 130) interacts with substrate. Catalysis depends on tyrosine 253, which acts as the Proton acceptor; specific for L-alanine. Residue methionine 301 coordinates substrate.

Belongs to the alanine racemase family. It depends on pyridoxal 5'-phosphate as a cofactor.

The catalysed reaction is L-alanine = D-alanine. Its pathway is amino-acid biosynthesis; D-alanine biosynthesis; D-alanine from L-alanine: step 1/1. Functionally, catalyzes the interconversion of L-alanine and D-alanine. May also act on other amino acids. This Erwinia tasmaniensis (strain DSM 17950 / CFBP 7177 / CIP 109463 / NCPPB 4357 / Et1/99) protein is Alanine racemase (alr).